The primary structure comprises 336 residues: Syntaxin-31 (336 aa).

At 1 to 314 (MGSTFRDRTV…QHLTRISSNR (314 aa)) the chain is on the cytoplasmic side. Disordered regions lie at residues 23–53 (GAIP…KASR) and 152–218 (RSEN…SQLR). Residues 154-163 (ENMKAHENRK) show a composition bias toward basic and acidic residues. The segment covering 164–181 (QLFSTKNAVDSPPQNNAK) has biased composition (polar residues). Low complexity predominate over residues 190–202 (SSSSNPFGNLQQP). The region spanning 244 to 306 (ENYSQSRAVA…EGARSALLQH (63 aa)) is the t-SNARE coiled-coil homology domain. A helical; Anchor for type IV membrane protein membrane pass occupies residues 315 to 335 (WLMMKIFAVIILFLIVFLFFV). Position 336 (A336) is a topological domain, vesicular.

The protein belongs to the syntaxin family. In terms of assembly, part of the t-SNARE complex. Interacts with CDC48A, but not with VPS45.

It localises to the golgi apparatus. Its subcellular location is the cis-Golgi network membrane. The protein localises to the cytoplasm. The protein resides in the endosome. In terms of biological role, vesicle trafficking protein that functions in the secretory pathway. The sequence is that of Syntaxin-31 (SYP31) from Arabidopsis thaliana (Mouse-ear cress).